We begin with the raw amino-acid sequence, 329 residues long: Cuticle collagen 6 (329 aa).

5 triple-helical region regions span residues 142–171 (GAAGPPGPEGPPGNDGKDGRNGNDGKNGRD), 189–212 (GAPGPMGAMGPKGPPGPKGSPGEP), 216–248 (GKSGDDGMAGQPGPIGRPGRDGMKGAPGAAGRL), 253–279 (GPQGAPGKPGPIGPPGPKGNPGPDGQS), and 282–320 (GPPGPPGDSGTPGHEGRAGPNGPAGPPGDNGEKGDCGHC). Positions 146–329 (PPGPEGPPGN…CPPPRTPPGY (184 aa)) are disordered. Positions 156-173 (DGKDGRNGNDGKNGRDAE) are enriched in basic and acidic residues. The span at 187–199 (PTGAPGPMGAMGP) shows a compositional bias: low complexity. The span at 200–212 (KGPPGPKGSPGEP) shows a compositional bias: pro residues. The span at 251–272 (VPGPQGAPGKPGPIGPPGPKGN) shows a compositional bias: pro residues. Low complexity predominate over residues 273-282 (PGPDGQSYQG). Positions 320 to 329 (CPPPRTPPGY) are enriched in pro residues.

This sequence belongs to the cuticular collagen family. In terms of assembly, collagen polypeptide chains are complexed within the cuticle by disulfide bonds and other types of covalent cross-links.

Nematode cuticles are composed largely of collagen-like proteins. The cuticle functions both as an exoskeleton and as a barrier to protect the worm from its environment. In Caenorhabditis elegans, this protein is Cuticle collagen 6.